The chain runs to 156 residues: Small ribosomal subunit protein uS7 (156 aa).

This sequence belongs to the universal ribosomal protein uS7 family. In terms of assembly, part of the 30S ribosomal subunit. Contacts proteins S9 and S11.

In terms of biological role, one of the primary rRNA binding proteins, it binds directly to 16S rRNA where it nucleates assembly of the head domain of the 30S subunit. Is located at the subunit interface close to the decoding center, probably blocks exit of the E-site tRNA. This chain is Small ribosomal subunit protein uS7, found in Streptococcus pneumoniae serotype 4 (strain ATCC BAA-334 / TIGR4).